The chain runs to 310 residues: UPF0761 membrane protein VSAL_I2938 (310 aa).

Helical transmembrane passes span 34–54, 97–117, 136–156, 178–198, 207–227, and 242–262; these read YMAYITLLSLVPLVTVLLSVL, MTAVGSGFLFVASVMLISAID, FSLYWMILTLGPLLVWASLAA, LLGWLPIILSFSAFLGLYLLV, HALVGAMSAGCLFEVSKVGFA, and ALAAVPILFVWIYLCWIIVLI.

Belongs to the UPF0761 family.

The protein resides in the cell inner membrane. The chain is UPF0761 membrane protein VSAL_I2938 from Aliivibrio salmonicida (strain LFI1238) (Vibrio salmonicida (strain LFI1238)).